Reading from the N-terminus, the 419-residue chain is Serine hydroxymethyltransferase (419 aa).

(6S)-5,6,7,8-tetrahydrofolate is bound by residues Leu-121 and 125–127 (GHL). The residue at position 229 (Lys-229) is an N6-(pyridoxal phosphate)lysine. Position 354-356 (354-356 (SPF)) interacts with (6S)-5,6,7,8-tetrahydrofolate.

This sequence belongs to the SHMT family. In terms of assembly, homodimer. The cofactor is pyridoxal 5'-phosphate.

The protein localises to the cytoplasm. The catalysed reaction is (6R)-5,10-methylene-5,6,7,8-tetrahydrofolate + glycine + H2O = (6S)-5,6,7,8-tetrahydrofolate + L-serine. It participates in one-carbon metabolism; tetrahydrofolate interconversion. The protein operates within amino-acid biosynthesis; glycine biosynthesis; glycine from L-serine: step 1/1. Its function is as follows. Catalyzes the reversible interconversion of serine and glycine with tetrahydrofolate (THF) serving as the one-carbon carrier. This reaction serves as the major source of one-carbon groups required for the biosynthesis of purines, thymidylate, methionine, and other important biomolecules. Also exhibits THF-independent aldolase activity toward beta-hydroxyamino acids, producing glycine and aldehydes, via a retro-aldol mechanism. This Coxiella burnetii (strain RSA 331 / Henzerling II) protein is Serine hydroxymethyltransferase.